A 65-amino-acid polypeptide reads, in one-letter code: Disintegrin VLO4 (65 aa).

The Disintegrin domain maps to 1–65; sequence MNSGNPCCDP…PDCPRNPWKG (65 aa). Disulfide bonds link Cys7–Cys30, Cys21–Cys27, Cys26–Cys51, and Cys39–Cys58. Residues 43 to 45 carry the Cell attachment site motif; sequence RGD.

The protein belongs to the disintegrin family. Dimeric disintegrin subfamily. Homodimer; disulfide-linked. In terms of tissue distribution, expressed by the venom gland.

The protein resides in the secreted. Functionally, poor inhibitor of platelet aggregation. The disintegrin inhibits the adhesion of cells expressing the RGD-dependent integrin alpha-5/beta-1 (ITGA5/ITGB1) to immobilized fibronectin. Inhibition on alpha-2b/beta-3 (ITGA2B/ITGB3) is low. The chain is Disintegrin VLO4 from Macrovipera lebetina obtusa (Levant blunt-nosed viper).